A 444-amino-acid polypeptide reads, in one-letter code: Ribosomal protein uS12 methylthiotransferase RimO (444 aa).

Residues 4-118 (IKYGVVSLGC…LSDAIKKSIE (115 aa)) form the MTTase N-terminal domain. [4Fe-4S] cluster is bound by residues Cys13, Cys48, Cys81, Cys155, Cys159, and Cys162. One can recognise a Radical SAM core domain in the interval 141–373 (TTQKHYAYLR…MQRDIVKSIN (233 aa)). The 67-residue stretch at 374-440 (ADKVNKVYKV…EYDLIGVVCD (67 aa)) folds into the TRAM domain.

It belongs to the methylthiotransferase family. RimO subfamily. The cofactor is [4Fe-4S] cluster.

It localises to the cytoplasm. The catalysed reaction is L-aspartate(89)-[ribosomal protein uS12]-hydrogen + (sulfur carrier)-SH + AH2 + 2 S-adenosyl-L-methionine = 3-methylsulfanyl-L-aspartate(89)-[ribosomal protein uS12]-hydrogen + (sulfur carrier)-H + 5'-deoxyadenosine + L-methionine + A + S-adenosyl-L-homocysteine + 2 H(+). Catalyzes the methylthiolation of an aspartic acid residue of ribosomal protein uS12. In Clostridium tetani (strain Massachusetts / E88), this protein is Ribosomal protein uS12 methylthiotransferase RimO.